The following is a 20-amino-acid chain: Small ribosomal subunit protein bS20 (20 aa).

The disordered stretch occupies residues 1-20 (ANNPGARKAIRKIEARTEVN). The span at 11 to 20 (RKIEARTEVN) shows a compositional bias: basic and acidic residues.

It belongs to the bacterial ribosomal protein bS20 family.

Functionally, binds directly to 16S ribosomal RNA. The sequence is that of Small ribosomal subunit protein bS20 (rpsT) from Brevundimonas vesicularis (Pseudomonas vesicularis).